The sequence spans 398 residues: Tryptophan synthase beta chain (398 aa).

Residue K90 is modified to N6-(pyridoxal phosphate)lysine.

This sequence belongs to the TrpB family. As to quaternary structure, tetramer of two alpha and two beta chains. Requires pyridoxal 5'-phosphate as cofactor.

The catalysed reaction is (1S,2R)-1-C-(indol-3-yl)glycerol 3-phosphate + L-serine = D-glyceraldehyde 3-phosphate + L-tryptophan + H2O. The protein operates within amino-acid biosynthesis; L-tryptophan biosynthesis; L-tryptophan from chorismate: step 5/5. In terms of biological role, the beta subunit is responsible for the synthesis of L-tryptophan from indole and L-serine. The protein is Tryptophan synthase beta chain of Anoxybacillus flavithermus (strain DSM 21510 / WK1).